A 438-amino-acid polypeptide reads, in one-letter code: GTPase Der (438 aa).

EngA-type G domains lie at 4–168 and 176–351; these read PIVA…PAVP and LKVA…EAAN. Residues 10 to 17, 57 to 61, 120 to 123, 182 to 189, 229 to 233, and 294 to 297 contribute to the GTP site; these read GRPNVGKS, DTGGI, NKVE, DTAGM, and NKWD. The KH-like domain occupies 352 to 436; that stretch reads RRVATGTLNA…PIRLIFRRGR (85 aa).

The protein belongs to the TRAFAC class TrmE-Era-EngA-EngB-Septin-like GTPase superfamily. EngA (Der) GTPase family. Associates with the 50S ribosomal subunit.

Functionally, GTPase that plays an essential role in the late steps of ribosome biogenesis. The sequence is that of GTPase Der from Moorella thermoacetica (strain ATCC 39073 / JCM 9320).